Consider the following 113-residue polypeptide: Pancreatic progenitor cell differentiation and proliferation factor B (113 aa).

This sequence belongs to the PPDPF family.

In terms of biological role, probable regulator of exocrine pancreas development. The protein is Pancreatic progenitor cell differentiation and proliferation factor B (ppdpf-b) of Xenopus laevis (African clawed frog).